A 615-amino-acid chain; its full sequence is Sodium-coupled neutral amino acid transporter 9 homolog (615 aa).

Over 1 to 165 (MPPFFAEFTE…LKDVSGKQGS (165 aa)) the chain is Cytoplasmic. Residues 41–65 (VDDNDTDPLLDDEPPRRLPPAGGVP) form a disordered region. Positions 42 to 52 (DDNDTDPLLDD) are enriched in acidic residues. A helical transmembrane segment spans residues 166-186 (IVTIFSIWNTMMGTSLLAMPW). Residues 175–180 (TMMGTS) are important for arginine binding and amino acid transport. Residues 187 to 192 (ALQQAG) lie on the Lumenal side of the membrane. The chain crosses the membrane as a helical span at residues 193 to 213 (LVLGIIIMLSMAAICFYTAYI). Residues 214–246 (VIESPKRLQDLSVDPLLAEFSDVCKSLFGRIGE) are Cytoplasmic-facing. A helical membrane pass occupies residues 247–273 (YCAVVFSVCVLIGGVIVYWVLMSNFLY). At 274 to 341 (YTGAVVYESM…TGDDSWSFDK (68 aa)) the chain is on the lumenal side. Asparagine 286 and asparagine 295 each carry an N-linked (GlcNAc...) asparagine glycan. The cysteines at positions 304 and 478 are disulfide-linked. Residues 342–358 (FWTLRGTVPIYLAFALF) traverse the membrane as a helical segment. Over 359–367 (PLMNFKSPT) the chain is Cytoplasmic. Residues 368 to 392 (FFTKFNVLGTISVMYLLMFVFSKLL) traverse the membrane as a helical segment. Topologically, residues 393 to 413 (ECGVNMDFSNPKSIHYVQLAN) are lumenal. A helical transmembrane segment spans residues 414–434 (MHFPALSGTLTLSYFIHNAVL). Topologically, residues 435-451 (TILRNQKHPENNARDLS) are cytoplasmic. Residues 452–472 (IGYCLVAFCYVFIGFTFFAAF) traverse the membrane as a helical segment. At 473–491 (PVQRSCISDNFLNNFGAGD) the chain is on the lumenal side. Residues 492–512 (VLSSTARLFLLFQMITVLPLL) traverse the membrane as a helical segment. At 513 to 533 (MFLVRSQLFYAIFGQTWPGAI) the chain is on the cytoplasmic side. A helical membrane pass occupies residues 534 to 554 (RVIILNVLLIAVAVGFATFYP). The Lumenal segment spans residues 555 to 561 (NVGSILR). A helical transmembrane segment spans residues 562-582 (YVGSISGLVYVFALPAMVYIK). Over 583–594 (QSEAAGTLTPMK) the chain is Cytoplasmic. Residues 595–615 (KYAHYGIIVIGVANLIAQFVI) traverse the membrane as a helical segment.

It belongs to the amino acid/polyamine transporter 2 family. SLC38A9 subfamily.

The protein localises to the lysosome membrane. The protein resides in the late endosome membrane. With respect to regulation, amino acid transport is sodium-dependent. Transport of leucine, tyrosine and phenylalanine is increased by arginine binding. Lysosomal amino acid transporter involved in the activation of mTORC1 in response to amino acid levels. Probably acts as an amino acid sensor of the Rag GTPases and Ragulator complexes, 2 complexes involved in amino acid sensing and activation of mTORC1, a signaling complex promoting cell growth in response to growth factors, energy levels, and amino acids. The sequence is that of Sodium-coupled neutral amino acid transporter 9 homolog from Caenorhabditis elegans.